The primary structure comprises 1021 residues: Probable calcium-transporting ATPase 6, plasma membrane-type (1021 aa).

Topologically, residues 1–155 are cytoplasmic; the sequence is MEGGRSWSIE…RSFWMFVWDA (155 aa). Transmembrane regions (helical) follow at residues 156–176 and 181–201; these read LHDL…VVGL and WPMG…VVLV. Over 202 to 241 the chain is Cytoplasmic; it reads TATSDYQQARKFMELDREKQKIYIRVTRDKKTKEVLVHDL. The next 2 helical transmembrane spans lie at 242–262 and 338–358; these read VVGD…GLFI and VATI…LVLL. Topologically, residues 359 to 384 are cytoplasmic; sequence ARFLADKGMHVGLLNWSANDALTIVN. A helical membrane pass occupies residues 385-405; it reads YFAIAVTIIVVAVPEGLPLAV. Aspartate 441 (4-aspartylphosphate intermediate) is an active-site residue. Mg(2+) is bound by residues aspartate 740 and aspartate 744. The chain crosses the membrane as a helical span at residues 807–827; the sequence is IVALIVNFVSACIIGSAPLTA. Residues 828 to 829 are Cytoplasmic-facing; the sequence is VQ. The next 2 membrane-spanning stretches (helical) occupy residues 830–850 and 879–899; these read LLWV…TEPP and GLYQ…LLSI. The Cytoplasmic segment spans residues 900–942; it reads EGPQSDKTINTLIFNSFVFCQVFNEINCREMEKINVLQGIFRN. 2 helical membrane passes run 943 to 963 and 974 to 994; these read WIFV…VEFL and GELW…SVIL. Over 995-1021 the chain is Cytoplasmic; sequence KCIPVEFNKTNTKPHGYELIPEGPEIL.

Belongs to the cation transport ATPase (P-type) (TC 3.A.3) family. Type IIB subfamily.

It localises to the membrane. The enzyme catalyses Ca(2+)(in) + ATP + H2O = Ca(2+)(out) + ADP + phosphate + H(+). With respect to regulation, activated by calmodulin. Its function is as follows. This magnesium-dependent enzyme catalyzes the hydrolysis of ATP coupled with the translocation of calcium from the cytosol out of the cell, into the endoplasmic reticulum, or into organelles. The polypeptide is Probable calcium-transporting ATPase 6, plasma membrane-type (Oryza sativa subsp. japonica (Rice)).